Reading from the N-terminus, the 180-residue chain is Large ribosomal subunit protein uL5 (180 aa).

It belongs to the universal ribosomal protein uL5 family. In terms of assembly, part of the 50S ribosomal subunit; part of the 5S rRNA/L5/L18/L25 subcomplex. Contacts the 5S rRNA and the P site tRNA. Forms a bridge to the 30S subunit in the 70S ribosome.

This is one of the proteins that bind and probably mediate the attachment of the 5S RNA into the large ribosomal subunit, where it forms part of the central protuberance. In the 70S ribosome it contacts protein S13 of the 30S subunit (bridge B1b), connecting the 2 subunits; this bridge is implicated in subunit movement. Contacts the P site tRNA; the 5S rRNA and some of its associated proteins might help stabilize positioning of ribosome-bound tRNAs. The sequence is that of Large ribosomal subunit protein uL5 from Leuconostoc mesenteroides subsp. mesenteroides (strain ATCC 8293 / DSM 20343 / BCRC 11652 / CCM 1803 / JCM 6124 / NCDO 523 / NBRC 100496 / NCIMB 8023 / NCTC 12954 / NRRL B-1118 / 37Y).